The primary structure comprises 203 residues: Endo-type membrane-bound lytic murein transglycosylase A (203 aa).

Positions 1-15 (MKLRWFAFLVVILAG) are cleaved as a signal peptide. C16 carries the N-palmitoyl cysteine lipid modification. C16 carries the S-diacylglycerol cysteine lipid modification.

It belongs to the transglycosylase Slt family.

It localises to the cell outer membrane. It carries out the reaction Endolytic cleavage of the (1-&gt;4)-beta-glycosidic linkage between N-acetylmuramic acid (MurNAc) and N-acetylglucosamine (GlcNAc) residues in peptidoglycan with concomitant formation of a 1,6-anhydrobond in the MurNAc residue.. Functionally, murein-degrading enzyme. May play a role in recycling of muropeptides during cell elongation and/or cell division. Preferentially cleaves at a distance of more than two disaccharide units from the ends of the glycan chain. The protein is Endo-type membrane-bound lytic murein transglycosylase A of Salmonella paratyphi C (strain RKS4594).